The following is a 219-amino-acid chain: Putative protease Do-like 6, chloroplastic (219 aa).

Residues 1–45 (MLFRSVHHIVARFSNSTSTPIHRFFYSPSLLRRRSSFNASLISRC) constitute a chloroplast transit peptide. Residues 61–216 (KIFSFSREPN…YSGQINKKIY (156 aa)) are serine protease. Catalysis depends on charge relay system residues H99, D130, and S208.

This sequence belongs to the peptidase S1B family.

The protein resides in the plastid. Its subcellular location is the chloroplast. In terms of biological role, putative serine protease. The protein is Putative protease Do-like 6, chloroplastic (DEGP6) of Arabidopsis thaliana (Mouse-ear cress).